Here is a 209-residue protein sequence, read N- to C-terminus: Regulator of G-protein signaling 1 (209 aa).

The tract at residues 18-42 (FFSASPKDSKEPSHSLLDDNKQKKR) is disordered. Over residues 24–38 (KDSKEPSHSLLDDNK) the composition is skewed to basic and acidic residues. Positions 85–200 (SLEKLLANQM…LKSNIYLNLL (116 aa)) constitute an RGS domain.

Interacts with GNAI1 and GNAQ. As to expression, expressed in multiple tissues.

It localises to the cell membrane. Its subcellular location is the cytoplasm. The protein localises to the cytosol. Regulates G protein-coupled receptor signaling cascades, including signaling downstream of the N-formylpeptide chemoattractant receptors and leukotriene receptors. Inhibits B cell chemotaxis toward CXCL12. Inhibits signal transduction by increasing the GTPase activity of G protein alpha subunits, thereby driving them into their inactive GDP-bound form. The chain is Regulator of G-protein signaling 1 (Rgs1) from Rattus norvegicus (Rat).